The sequence spans 178 residues: Ribosome maturation factor RimP (178 aa).

It belongs to the RimP family.

It localises to the cytoplasm. Functionally, required for maturation of 30S ribosomal subunits. The protein is Ribosome maturation factor RimP of Streptococcus pyogenes serotype M1.